A 147-amino-acid polypeptide reads, in one-letter code: Hemoglobin subunit beta (147 aa).

The Globin domain maps to 2–147 (EWTDAERSAI…VVSALCRQYH (146 aa)). Heme b-binding residues include His-63 and His-92.

It belongs to the globin family. Heterotetramer of two alpha chains and two beta chains. Red blood cells.

In terms of biological role, involved in oxygen transport from gills to the various peripheral tissues. The polypeptide is Hemoglobin subunit beta (hbb) (Carassius auratus (Goldfish)).